We begin with the raw amino-acid sequence, 270 residues long: Putative phosphoenolpyruvate synthase regulatory protein (270 aa).

150–157 lines the ADP pocket; sequence GVSRCGKT.

Belongs to the pyruvate, phosphate/water dikinase regulatory protein family. PSRP subfamily.

The enzyme catalyses [pyruvate, water dikinase] + ADP = [pyruvate, water dikinase]-phosphate + AMP + H(+). It catalyses the reaction [pyruvate, water dikinase]-phosphate + phosphate + H(+) = [pyruvate, water dikinase] + diphosphate. Bifunctional serine/threonine kinase and phosphorylase involved in the regulation of the phosphoenolpyruvate synthase (PEPS) by catalyzing its phosphorylation/dephosphorylation. This chain is Putative phosphoenolpyruvate synthase regulatory protein, found in Shewanella loihica (strain ATCC BAA-1088 / PV-4).